The following is a 576-amino-acid chain: Mycobactin import ATP-binding/permease protein IrtB (576 aa).

The Cytoplasmic segment spans residues 1-25 (MIRTLIALVPADKRGTLGLYTVLTV). In terms of domain architecture, ABC transmembrane type-1 spans 19 to 299 (LYTVLTVLSV…LSELTPAIES (281 aa)). Residues 26–46 (LSVVIRAAGTVLLVPLVAALF) form a helical membrane-spanning segment. Topologically, residues 47-52 (GDTPQD) are periplasmic. The chain crosses the membrane as a helical span at residues 53–73 (AWPWLGWLTAATAAGWIVDTT). Over 74 to 131 (TSRLGFDLGFAVLDHTQHDVADRMPNIRLDWLTAENTATARAAIASTGPELVGLVVNL) the chain is Cytoplasmic. The next 2 membrane-spanning stretches (helical) occupy residues 132–152 (LTPLIGAVLLPAAIAVALVAV) and 153–173 (SPPLGLAALAGVVVLLGAMWA). Over 174-241 (SNRLSRKADT…RLLAMQIPGQ (68 aa)) the chain is Cytoplasmic. A helical transmembrane segment spans residues 242-262 (LLFSLASQLALILLAGMATWL). Over 263–267 (TVRGE) the chain is Periplasmic. Residues 268-288 (LSVPEAVAMIVVVARYLEPFT) form a helical membrane-spanning segment. Topologically, residues 289-576 (SLSELTPAIE…HEAADWQITH (288 aa)) are cytoplasmic. Positions 332–565 (IEFDCVTFGY…GGRFDEFWRR (234 aa)) constitute an ABC transporter domain. Residue 364–371 (GPSGSGKS) coordinates ATP.

The protein belongs to the ABC transporter superfamily. Siderophore-Fe(3+) uptake transporter (SIUT) (TC 3.A.1.21) family. In terms of assembly, forms a heterodimer with IrtA.

The protein resides in the cell inner membrane. In terms of biological role, part of the ABC transporter complex IrtAB involved in the import of iron-bound mycobactin (Fe-MBT) and carboxymycobactin (Fe-cMBT). Has a preference for Fe-MBT over Fe-cMBT. Transmembrane domains (TMD) form a pore in the membrane and the ATP-binding domain (NBD) is responsible for energy generation. This chain is Mycobactin import ATP-binding/permease protein IrtB, found in Mycolicibacterium smegmatis (strain ATCC 700084 / mc(2)155) (Mycobacterium smegmatis).